Here is a 608-residue protein sequence, read N- to C-terminus: Glutamine--fructose-6-phosphate aminotransferase [isomerizing] (608 aa).

Cys2 functions as the Nucleophile; for GATase activity in the catalytic mechanism. One can recognise a Glutamine amidotransferase type-2 domain in the interval 2-217 (CGIVGIVGNQ…DGDWAVIGKT (216 aa)). SIS domains lie at 281 to 422 (ISDA…ARGT) and 456 to 598 (LSRE…VDQP). Lys603 functions as the For Fru-6P isomerization activity in the catalytic mechanism.

It is found in the cytoplasm. It catalyses the reaction D-fructose 6-phosphate + L-glutamine = D-glucosamine 6-phosphate + L-glutamate. In terms of biological role, involved in the production of the root hair deformation (HAD) factor specifically on medicago. In Rhizobium meliloti (strain 1021) (Ensifer meliloti), this protein is Glutamine--fructose-6-phosphate aminotransferase [isomerizing] (nodM).